The chain runs to 327 residues: Malate dehydrogenase (327 aa).

11-17 (GAAGQIS) serves as a coordination point for NAD(+). The substrate site is built by arginine 92 and arginine 98. NAD(+) contacts are provided by residues asparagine 105, glutamine 112, and 129-131 (VGN). Substrate contacts are provided by asparagine 131 and arginine 162. The active-site Proton acceptor is the histidine 187.

It belongs to the LDH/MDH superfamily. MDH type 2 family.

The enzyme catalyses (S)-malate + NAD(+) = oxaloacetate + NADH + H(+). In terms of biological role, catalyzes the reversible oxidation of malate to oxaloacetate. The polypeptide is Malate dehydrogenase (Nitrosomonas europaea (strain ATCC 19718 / CIP 103999 / KCTC 2705 / NBRC 14298)).